Consider the following 175-residue polypeptide: Putative lipoprotein LppN (175 aa).

The N-terminal stretch at 1 to 20 (MRLPGRHVLYALSAVTMLAA) is a signal peptide. C21 is lipidated: N-palmitoyl cysteine. A lipid anchor (S-diacylglycerol cysteine) is attached at C21. The tract at residues 31–56 (ASTNMNPTNPPATAETATVSPTPAPQ) is disordered. Low complexity predominate over residues 33–48 (TNMNPTNPPATAETAT).

Its subcellular location is the cell membrane. This is Putative lipoprotein LppN (lppN) from Mycobacterium bovis (strain ATCC BAA-935 / AF2122/97).